A 532-amino-acid polypeptide reads, in one-letter code: E3 ubiquitin-protein ligase ICP0 (532 aa).

The Zn(2+) site is built by cysteine 8, cysteine 11, cysteine 24, histidine 26, cysteine 29, cysteine 32, cysteine 43, and cysteine 46. The RING-type zinc-finger motif lies at cysteine 8–lysine 47. Disordered regions lie at residues glutamate 206–proline 391, alanine 406–arginine 426, glutamate 461–glycine 498, and glutamine 510–glutamine 532. Composition is skewed to acidic residues over residues serine 217–valine 227 and aspartate 234–serine 243. Over residues arginine 286 to proline 295 the composition is skewed to basic residues.

Auto-ubiquitinated.

It carries out the reaction S-ubiquitinyl-[E2 ubiquitin-conjugating enzyme]-L-cysteine + [acceptor protein]-L-lysine = [E2 ubiquitin-conjugating enzyme]-L-cysteine + N(6)-ubiquitinyl-[acceptor protein]-L-lysine.. Its function is as follows. Evades nuclear antiviral defenses triggered by dsDNA viruses. Acts during the initial stages of lytic infection and the reactivation of latent viral genome. Prevents the antiviral effect of nuclear bodies by degrading host PML and SP100. The sequence is that of E3 ubiquitin-protein ligase ICP0 (63) from Equus caballus (Horse).